The primary structure comprises 203 residues: Endo-type membrane-bound lytic murein transglycosylase A (203 aa).

A signal peptide spans 1-15; it reads MKLRWLMWLVVFLAG. Cys16 is lipidated: N-palmitoyl cysteine. The S-diacylglycerol cysteine moiety is linked to residue Cys16.

It belongs to the transglycosylase Slt family.

Its subcellular location is the cell outer membrane. The enzyme catalyses Endolytic cleavage of the (1-&gt;4)-beta-glycosidic linkage between N-acetylmuramic acid (MurNAc) and N-acetylglucosamine (GlcNAc) residues in peptidoglycan with concomitant formation of a 1,6-anhydrobond in the MurNAc residue.. In terms of biological role, murein-degrading enzyme. May play a role in recycling of muropeptides during cell elongation and/or cell division. Preferentially cleaves at a distance of more than two disaccharide units from the ends of the glycan chain. This Cronobacter sakazakii (strain ATCC BAA-894) (Enterobacter sakazakii) protein is Endo-type membrane-bound lytic murein transglycosylase A.